The following is a 383-amino-acid chain: MSSPDGGYASDDQNQGKCSVPIMMTGLGQCQWAEPMNSLGEGKLKSDAGSANSRGKAEARIRRPMNAFMVWAKDERKRLAQQNPDLHNAELSKMLGKSWKALTLAEKRPFVEEAERLRVQHMQDHPNYKYRPRRRKQVKRMKRADTGFMHMAEPPESAVLGTDGRMCLESFSLGYHEQTYPHSQLPQGSHYREPQAMAPHYDGYSLPTPESSPLDLAEADPVFFTSPPQDECQMMPYSYNASYTHQQNSGASMLVRQMPQAEQMGQGSPVQGMMGCQSSPQMYYGQMYLPGSARHHQLPQAGQNSPPPEAQQMGRADHIQQVDMLAEVDRTEFEQYLSYVAKSDLGMHYHGQESVVPTADNGPISSVLSDASTAVYYCNYPSA.

2 disordered regions span residues 1–20 (MSSP…KCSV) and 37–58 (NSLG…GKAE). The HMG box DNA-binding region spans 61 to 129 (IRRPMNAFMV…QHMQDHPNYK (69 aa)). One can recognise a Sox C-terminal domain in the interval 267 to 382 (GSPVQGMMGC…TAVYYCNYPS (116 aa)). Positions 331-339 (TEFEQYLSY) match the 9aaTAD motif. Positions 332–337 (EFEQYL) are required for transcriptional activity and interaction with ctnnb1.

In terms of assembly, interacts (via C-terminus) with ctnnb1/beta-catenin (via Armadillo repeats); this interaction is required for inhibition of wnt-signaling. As to expression, expressed throughout the deep and superficial endoderm during gastrulation. During neural and early tail bud stages, expression declines significantly in the anterior endoderm, except in the endoderm behind the cement gland. Strong expression persists in the endoderm posterior to the liver diverticulum until late tail bud stage. By late tailbud, expression is undetectable in most of the endoderm but is maintained in the presumptive gall bladder region and the extreme posterior region. In addition, expressed in endothelial cells in the head and along the flank of the embryo.

The protein localises to the nucleus. In terms of biological role, transcription activator. Binds to the DNA sequence 5'-AACAAT-3'. All of the sox17 proteins are required for embryonic endoderm development and gastrulation movements, and show some redundancy in function. In addition, the sox17 proteins have distinct but overlapping roles in later gut development. Acts downstream of vegt-signaling in endoderm differentiation to induce a range of endodermal genes both directly (including endodermin and dhh/chh) and indirectly. Also represses wnt-responsive genes to inhibit wnt/beta-catenin signaling. This Xenopus tropicalis (Western clawed frog) protein is Transcription factor Sox-17-alpha (sox17a).